The following is a 179-amino-acid chain: UPF0303 protein YBR137W (179 aa).

This sequence belongs to the UPF0303 family.

The protein localises to the cytoplasm. This chain is UPF0303 protein YBR137W, found in Saccharomyces cerevisiae (strain ATCC 204508 / S288c) (Baker's yeast).